Consider the following 172-residue polypeptide: L-methionine sulfoximine/L-methionine sulfone acetyltransferase (172 aa).

Residues 3–166 (ASIRDAGVAD…DLTFMQLNLD (164 aa)) enclose the N-acetyltransferase domain. Residues 75-77 (RPF) and 85-87 (EHS) contribute to the substrate site. Acetyl-CoA contacts are provided by residues 88–90 (VYV), 96–101 (GKGLGV), and N127.

In terms of assembly, homodimer.

It carries out the reaction L-methionine sulfoximine + acetyl-CoA = N-acetyl-L-methionine sulfoximine + CoA + H(+). The catalysed reaction is L-methionine sulfone + acetyl-CoA = N-acetyl-L-methionine sulfone + CoA + H(+). Plays a role in the resistance against the toxic effects of L-methionine sulfoximine (MSX), a rare amino acid, which inhibits glutamine synthetase (GlnA). Catalyzes the acetylation of L-methionine sulfoximine (MSX). It can also use L-methionine sulfone (MSO). The protein is L-methionine sulfoximine/L-methionine sulfone acetyltransferase of Pseudomonas paraeruginosa (strain DSM 24068 / PA7) (Pseudomonas aeruginosa (strain PA7)).